The primary structure comprises 87 residues: uncharacterized protein (87 aa).

This is an uncharacterized protein from Ureaplasma parvum serovar 3 (strain ATCC 700970).